The primary structure comprises 420 residues: L-rhamnose isomerase (420 aa).

Mn(2+)-binding residues include H264, D296, and D298.

The protein belongs to the rhamnose isomerase family. Requires Mn(2+) as cofactor.

Its subcellular location is the cytoplasm. The catalysed reaction is L-rhamnopyranose = L-rhamnulose. It participates in carbohydrate degradation; L-rhamnose degradation; glycerone phosphate from L-rhamnose: step 1/3. Its function is as follows. Catalyzes the interconversion of L-rhamnose and L-rhamnulose. The protein is L-rhamnose isomerase of Listeria monocytogenes serotype 4b (strain CLIP80459).